Here is a 159-residue protein sequence, read N- to C-terminus: ATP synthase subunit b (159 aa).

Residues Thr7–Phe27 form a helical membrane-spanning segment.

The protein belongs to the ATPase B chain family. In terms of assembly, F-type ATPases have 2 components, F(1) - the catalytic core - and F(0) - the membrane proton channel. F(1) has five subunits: alpha(3), beta(3), gamma(1), delta(1), epsilon(1). F(0) has three main subunits: a(1), b(2) and c(10-14). The alpha and beta chains form an alternating ring which encloses part of the gamma chain. F(1) is attached to F(0) by a central stalk formed by the gamma and epsilon chains, while a peripheral stalk is formed by the delta and b chains.

The protein localises to the cell membrane. In terms of biological role, f(1)F(0) ATP synthase produces ATP from ADP in the presence of a proton or sodium gradient. F-type ATPases consist of two structural domains, F(1) containing the extramembraneous catalytic core and F(0) containing the membrane proton channel, linked together by a central stalk and a peripheral stalk. During catalysis, ATP synthesis in the catalytic domain of F(1) is coupled via a rotary mechanism of the central stalk subunits to proton translocation. Functionally, component of the F(0) channel, it forms part of the peripheral stalk, linking F(1) to F(0). The protein is ATP synthase subunit b of Clostridium novyi (strain NT).